We begin with the raw amino-acid sequence, 302 residues long: tRNA pseudouridine synthase B (302 aa).

Catalysis depends on Asp43, which acts as the Nucleophile.

This sequence belongs to the pseudouridine synthase TruB family. Type 1 subfamily.

It carries out the reaction uridine(55) in tRNA = pseudouridine(55) in tRNA. Its function is as follows. Responsible for synthesis of pseudouridine from uracil-55 in the psi GC loop of transfer RNAs. This is tRNA pseudouridine synthase B from Burkholderia pseudomallei (strain 668).